The following is a 474-amino-acid chain: A-type ATP synthase subunit B (474 aa).

The protein belongs to the ATPase alpha/beta chains family. Has multiple subunits with at least A(3), B(3), C, D, E, F, H, I and proteolipid K(x).

It is found in the cell membrane. Component of the A-type ATP synthase that produces ATP from ADP in the presence of a proton gradient across the membrane. The B chain is a regulatory subunit. The sequence is that of A-type ATP synthase subunit B from Halorubrum lacusprofundi (strain ATCC 49239 / DSM 5036 / JCM 8891 / ACAM 34).